Reading from the N-terminus, the 356-residue chain is MTLRETVNNAHSHWMDADGPESEIIISSRVRVARNLAGIPFPHLLNKENSEKVIHAVRLAISNKEASELLGGLELSSLGELSPLERQILVDKHLISPDLLNDFQRKAVVLREDEVVSIMVNEEDHLRIQCILPGLQLKEAWDVVNRVDDGLEKTLDYAFSEKVGYLTSCPTNVGTGMRASVMIHLPGLKLAKQLAGVLNAINKLGLTVRGLYGEGTEALGDLFQISNQITLGQSEEEIINNLISIARQILAQEQAARRNLYKDRREVIEDRVFRAFGALKYARILSSEEAMRLFSDLRLGVEMKIISGIPVRLLNELMVKIRPAFITKMAGRELTPYQRDIFRAGLIRREFANLPV.

Residues 24-256 (IIISSRVRVA…RQILAQEQAA (233 aa)) enclose the Phosphagen kinase C-terminal domain. ATP contacts are provided by residues 27 to 31 (SSRVR), histidine 93, arginine 127, 178 to 182 (RASVM), and 209 to 214 (RGLYGE). Positions 339–344 (RDIFRA) match the RDXXRA motif of the pArg binding pocket involved in allosteric regulation motif.

The protein belongs to the ATP:guanido phosphotransferase family.

The enzyme catalyses L-arginyl-[protein] + ATP = N(omega)-phospho-L-arginyl-[protein] + ADP + H(+). Its activity is regulated as follows. Appears to be allosterically activated by the binding of pArg-containing polypeptides to the pArg-binding pocket localized in the C-terminal domain of McsB. In terms of biological role, catalyzes the specific phosphorylation of arginine residues in proteins. The protein is Protein-arginine kinase of Pelotomaculum thermopropionicum (strain DSM 13744 / JCM 10971 / SI).